The primary structure comprises 342 residues: Leucine-rich repeat-containing protein 23 (342 aa).

Residues 1-30 show a composition bias toward acidic residues; the sequence is MSDEDDLEDFETDQDDLEREDDEKETEEWE. Residues 1-42 form a disordered region; sequence MSDEDDLEDFETDQDDLEREDDEKETEEWEDYRKEGEESEDW. Positions 3-27 form a coiled coil; the sequence is DEDDLEDFETDQDDLEREDDEKETE. LRR repeat units follow at residues 91–112, 113–133, 134–154, 155–176, 179–199, 200–221, 222–243, and 245–266; these read HLRY…NHLT, NLLW…NELP, YLQI…ISHP, RLAS…DPQK, SLHT…INLP, KLKN…ENLS, NLTT…SKEM, and SLQY…AKLR. An interaction with RSPH9 region spans residues 207 to 342; sequence AQNMLKKVEG…PESELDQSST (136 aa). The LRRCT domain maps to 279 to 317; it reads NPCTDENDYRQEALVQIAHLERLDKEFYEEEERAEADEI. A coiled-coil region spans residues 306–332; that stretch reads YEEEERAEADEIRQRMKEEQEQEAEVE. The disordered stretch occupies residues 307–342; it reads EEEERAEADEIRQRMKEEQEQEAEVEPESELDQSST. Positions 314-324 are enriched in basic and acidic residues; that stretch reads ADEIRQRMKEE. The segment covering 325-342 has biased composition (acidic residues); sequence QEQEAEVEPESELDQSST.

As to quaternary structure, component of the axonemal radial spoke complex. Interacts with RSPH3. Interacts with RSPH9.

The protein resides in the cytoplasm. It is found in the cytoskeleton. It localises to the flagellum axoneme. Essential for sperm motility and male fertility. Plays an important role in the proper assembly of the third radial spoke (RS3) head and the bridge structure between RS2 and RS3 in the sperm flagella. The polypeptide is Leucine-rich repeat-containing protein 23 (LRRC23) (Bos taurus (Bovine)).